The chain runs to 510 residues: tRNA-2-methylthio-N(6)-dimethylallyladenosine synthase (510 aa).

Residues 1-25 (MSGFNDSPVPESAEKADGLLSQERG) form a disordered region. Residues 34–154 (RKLFVKSYGC…LPDLLRRVAH (121 aa)) form the MTTase N-terminal domain. [4Fe-4S] cluster is bound by residues Cys-43, Cys-79, Cys-117, Cys-195, Cys-199, and Cys-202. The Radical SAM core domain occupies 181-414 (AERGVGAFVT…QALLEEQRQA (234 aa)). A TRAM domain is found at 417–479 (KAMIGRVLPV…PNSFHGRLLA (63 aa)). Residues 484 to 493 (QESAQGQESA) show a composition bias toward polar residues. A disordered region spans residues 484–510 (QESAQGQESAQGMERMEQNARAWEVPV).

It belongs to the methylthiotransferase family. MiaB subfamily. Monomer. [4Fe-4S] cluster serves as cofactor.

The protein localises to the cytoplasm. It catalyses the reaction N(6)-dimethylallyladenosine(37) in tRNA + (sulfur carrier)-SH + AH2 + 2 S-adenosyl-L-methionine = 2-methylsulfanyl-N(6)-dimethylallyladenosine(37) in tRNA + (sulfur carrier)-H + 5'-deoxyadenosine + L-methionine + A + S-adenosyl-L-homocysteine + 2 H(+). Its function is as follows. Catalyzes the methylthiolation of N6-(dimethylallyl)adenosine (i(6)A), leading to the formation of 2-methylthio-N6-(dimethylallyl)adenosine (ms(2)i(6)A) at position 37 in tRNAs that read codons beginning with uridine. The sequence is that of tRNA-2-methylthio-N(6)-dimethylallyladenosine synthase from Beijerinckia indica subsp. indica (strain ATCC 9039 / DSM 1715 / NCIMB 8712).